The following is a 488-amino-acid chain: Type II restriction enzyme HgaI (488 aa).

The catalysed reaction is Endonucleolytic cleavage of DNA to give specific double-stranded fragments with terminal 5'-phosphates.. Its function is as follows. An S subtype restriction enzyme that recognizes the double-stranded sequences 5'-GACGC-3' and 5'-GCGTC-3' and cleaves respectively 10 bases after G-1 and 10 bases before G'-1. The protein is Type II restriction enzyme HgaI (hgaIR) of Avibacterium volantium (Pasteurella volantium).